Here is a 209-residue protein sequence, read N- to C-terminus: Thymidine kinase (209 aa).

Residues 9-16 and 88-91 contribute to the ATP site; these read AAMNAGKS and DEAQ. Residue E89 is the Proton acceptor of the active site. Residues C146, C148, C183, and H186 each coordinate Zn(2+).

It belongs to the thymidine kinase family. In terms of assembly, homotetramer.

It is found in the cytoplasm. The enzyme catalyses thymidine + ATP = dTMP + ADP + H(+). The chain is Thymidine kinase from Legionella pneumophila (strain Lens).